Reading from the N-terminus, the 548-residue chain is Probable 5-epi-aristolochene synthase 4 (548 aa).

Mg(2+) is bound by residues Asp301, Asp305, Asp444, Thr448, and Glu452. The short motif at 301–305 is the DDXXD motif element; it reads DDTFD.

The protein belongs to the terpene synthase family. Monomer. Mg(2+) serves as cofactor.

It is found in the cytoplasm. It carries out the reaction (2E,6E)-farnesyl diphosphate = (+)-5-epi-aristolochene + diphosphate. It functions in the pathway secondary metabolite biosynthesis; terpenoid biosynthesis. Catalyzes the cyclization of trans,trans-farnesyl diphosphate (FPP) to the bicyclic intermediate 5-epi-aristolochene, initial step in the conversion of FPP to the sesquiterpenoid antifungal phytoalexin capsidiol. Produces germacrene A as an enzyme-bound intermediate that is not released by the enzyme, but is further cyclized to produce the bicyclic 5-epi-aristolochene. The protein is Probable 5-epi-aristolochene synthase 4 of Nicotiana attenuata (Coyote tobacco).